Here is a 223-residue protein sequence, read N- to C-terminus: ATP-dependent dethiobiotin synthetase BioD (223 aa).

Threonine 16 provides a ligand contact to Mg(2+). Lysine 37 is a catalytic residue. Serine 41 is a substrate binding site. Aspartate 50 and glutamate 111 together coordinate Mg(2+). Residues aspartate 50, 111–114, and 171–172 contribute to the ATP site; these read EGAG and NR.

It belongs to the dethiobiotin synthetase family. Homodimer. Mg(2+) serves as cofactor.

Its subcellular location is the cytoplasm. It catalyses the reaction (7R,8S)-7,8-diammoniononanoate + CO2 + ATP = (4R,5S)-dethiobiotin + ADP + phosphate + 3 H(+). It participates in cofactor biosynthesis; biotin biosynthesis; biotin from 7,8-diaminononanoate: step 1/2. Functionally, catalyzes a mechanistically unusual reaction, the ATP-dependent insertion of CO2 between the N7 and N8 nitrogen atoms of 7,8-diaminopelargonic acid (DAPA, also called 7,8-diammoniononanoate) to form a ureido ring. The sequence is that of ATP-dependent dethiobiotin synthetase BioD from Anaeromyxobacter sp. (strain K).